Consider the following 727-residue polypeptide: Catalase-peroxidase (727 aa).

The tract at residues 1–21 (MDAKVEDNIAGKCPMGHGRGP) is disordered. The tryptophyl-tyrosyl-methioninium (Trp-Tyr) (with M-243) cross-link spans 95-217 (WHAAGTYRIT…LGAVQMGLIY (123 aa)). Catalysis depends on histidine 96, which acts as the Proton acceptor. Residues 217–243 (YVNPEGPNGNPDPLASARDIRETFARM) constitute a cross-link (tryptophyl-tyrosyl-methioninium (Tyr-Met) (with W-95)). Heme b is bound at residue histidine 258.

It belongs to the peroxidase family. Peroxidase/catalase subfamily. As to quaternary structure, homodimer or homotetramer. It depends on heme b as a cofactor. Formation of the three residue Trp-Tyr-Met cross-link is important for the catalase, but not the peroxidase activity of the enzyme.

It catalyses the reaction H2O2 + AH2 = A + 2 H2O. The enzyme catalyses 2 H2O2 = O2 + 2 H2O. Bifunctional enzyme with both catalase and broad-spectrum peroxidase activity. Important for stationary phase survival. The polypeptide is Catalase-peroxidase (Caulobacter vibrioides (strain ATCC 19089 / CIP 103742 / CB 15) (Caulobacter crescentus)).